The primary structure comprises 115 residues: Nucleoid-associated protein tlr0723 (115 aa).

It belongs to the YbaB/EbfC family. As to quaternary structure, homodimer.

The protein localises to the cytoplasm. Its subcellular location is the nucleoid. Its function is as follows. Binds to DNA and alters its conformation. May be involved in regulation of gene expression, nucleoid organization and DNA protection. This Thermosynechococcus vestitus (strain NIES-2133 / IAM M-273 / BP-1) protein is Nucleoid-associated protein tlr0723.